Here is a 78-residue protein sequence, read N- to C-terminus: Probable [Fe-S]-dependent transcriptional repressor (78 aa).

Residues C56, C61, C64, and C70 each contribute to the iron-sulfur cluster site.

Belongs to the FeoC family.

Its function is as follows. May function as a transcriptional regulator that controls feoABC expression. This is Probable [Fe-S]-dependent transcriptional repressor from Escherichia coli O127:H6 (strain E2348/69 / EPEC).